Consider the following 95-residue polypeptide: Protein TusB (95 aa).

The protein belongs to the DsrH/TusB family. As to quaternary structure, heterohexamer, formed by a dimer of trimers. The hexameric TusBCD complex contains 2 copies each of TusB, TusC and TusD. The TusBCD complex interacts with TusE.

The protein resides in the cytoplasm. Part of a sulfur-relay system required for 2-thiolation of 5-methylaminomethyl-2-thiouridine (mnm(5)s(2)U) at tRNA wobble positions. This chain is Protein TusB, found in Escherichia coli O81 (strain ED1a).